Reading from the N-terminus, the 510-residue chain is ATP synthase subunit alpha (510 aa).

An ATP-binding site is contributed by 169 to 176 (GDRQTGKT).

This sequence belongs to the ATPase alpha/beta chains family. In terms of assembly, F-type ATPases have 2 components, CF(1) - the catalytic core - and CF(0) - the membrane proton channel. CF(1) has five subunits: alpha(3), beta(3), gamma(1), delta(1), epsilon(1). CF(0) has four main subunits: a(1), b(1), b'(1) and c(9-12).

It localises to the cell inner membrane. The enzyme catalyses ATP + H2O + 4 H(+)(in) = ADP + phosphate + 5 H(+)(out). Its function is as follows. Produces ATP from ADP in the presence of a proton gradient across the membrane. The alpha chain is a regulatory subunit. This is ATP synthase subunit alpha from Rhodopseudomonas palustris (strain ATCC BAA-98 / CGA009).